The sequence spans 350 residues: MTTSIIKNQEIKNKLSNPELRLKDIIKTLPKECFQQNRRKAWTQALLSVVMVGLGYWSLAIAPWFLLPIAWIFTGTALTGFFVIGHDCGHRSFAKRRWVNDLVGHIFMMPLIYPFHSWRIKHNHHHKHTNKLDEDNAWHPIRPEVFASWGKTRQSAFKLFMRQRLWWVGSVGHWAVVHFDWRKFKVKDQADVKLSVAVVVLFAAVAFPTLIATTGIWGFVKFWFVPWLGYHFWMSTFTIVHHTYPDVPFEAENKWHEAMAQLFGTIHCDYPKWVEVLCHDINVHVPHHLSTAIPSYNLRLAYSSIQENWGDYLHDELRFSWSLMKLITDECQLYQTDVGYQPFKDYYAGR.

Transmembrane regions (helical) follow at residues 41-61 (AWTQ…SLAI) and 64-84 (WFLL…FFVI). A Histidine box-1 motif is present at residues 86–90 (HDCGH). A helical transmembrane segment spans residues 98 to 118 (WVNDLVGHIFMMPLIYPFHSW). The Histidine box-2 signature appears at 122-126 (HNHHH). The next 2 membrane-spanning stretches (helical) occupy residues 196-216 (VAVV…TTGI) and 219-239 (FVKF…TFTI). The short motif at 287–291 (HHLST) is the Histidine box-3 element.

Belongs to the fatty acid desaturase type 2 family. It depends on Fe(2+) as a cofactor.

The protein localises to the membrane. It catalyses the reaction a 1-[(9Z)-octadecenoyl]-2-acyl-glycerolipid + 2 reduced [2Fe-2S]-[ferredoxin] + O2 + 2 H(+) = a 1-[(9Z,12Z)-octadecdienoyl]-2-acyl-glycerolipid + 2 oxidized [2Fe-2S]-[ferredoxin] + 2 H2O. It participates in lipid metabolism; polyunsaturated fatty acid biosynthesis. Its function is as follows. Desaturase involved in fatty acid biosynthesis. Introduces a double bond at carbon 12 of oleoyl groups (18:1) attached to the sn-1 position of the glycerol moiety of membrane glycerolipids. This chain is sn-1 oleoyl-lipid 12-desaturase, found in Anabaena variabilis.